Reading from the N-terminus, the 156-residue chain is Small ribosomal subunit protein uS7 (156 aa).

Belongs to the universal ribosomal protein uS7 family. As to quaternary structure, part of the 30S ribosomal subunit. Contacts proteins S9 and S11.

In terms of biological role, one of the primary rRNA binding proteins, it binds directly to 16S rRNA where it nucleates assembly of the head domain of the 30S subunit. Is located at the subunit interface close to the decoding center, probably blocks exit of the E-site tRNA. The polypeptide is Small ribosomal subunit protein uS7 (Macrococcus caseolyticus (strain JCSC5402) (Macrococcoides caseolyticum)).